A 99-amino-acid polypeptide reads, in one-letter code: MWGVVDDSAEEPWHELWGLFRPDGDVSWQHKALCAQTDPEAFFPEKGGSTRDAKRVCAKCEVREQCLKWAIDHDERFGIWGGMSERERRRYKREHRERA.

A 4Fe-4S Wbl-type domain is found at Leu33–Arg90. [4Fe-4S] cluster contacts are provided by Cys34, Cys57, Cys60, and Cys66.

This sequence belongs to the WhiB family. [4Fe-4S] cluster serves as cofactor. Post-translationally, the Fe-S cluster can be nitrosylated by nitric oxide (NO). Upon Fe-S cluster removal intramolecular disulfide bonds are formed.

Its subcellular location is the cytoplasm. In terms of biological role, acts as a transcriptional regulator. Probably redox-responsive. The apo- but not holo-form probably binds DNA. The protein is Transcriptional regulator WhiB2 (whiB2) of Bifidobacterium longum (strain NCC 2705).